Consider the following 469-residue polypeptide: UDP-N-acetylmuramate--L-alanine ligase (469 aa).

112 to 118 (GTHGKTT) provides a ligand contact to ATP.

This sequence belongs to the MurCDEF family.

Its subcellular location is the cytoplasm. It carries out the reaction UDP-N-acetyl-alpha-D-muramate + L-alanine + ATP = UDP-N-acetyl-alpha-D-muramoyl-L-alanine + ADP + phosphate + H(+). Its pathway is cell wall biogenesis; peptidoglycan biosynthesis. In terms of biological role, cell wall formation. This is UDP-N-acetylmuramate--L-alanine ligase from Methylibium petroleiphilum (strain ATCC BAA-1232 / LMG 22953 / PM1).